The primary structure comprises 78 residues: Small venom protein 2 (78 aa).

The first 19 residues, 1–19 (MKFIVLLGALLALLVAVSA), serve as a signal peptide directing secretion. A propeptide spanning residues 20 to 42 (DRIAREAPEMESVDEAVLTRQAR) is cleaved from the precursor.

In terms of tissue distribution, expressed by the venom gland.

Its subcellular location is the secreted. The polypeptide is Small venom protein 2 (Pimpla hypochondriaca (Parasitoid wasp)).